The sequence spans 350 residues: Twinfilin-1 (350 aa).

Position 2 is an N-acetylserine (serine 2). Residues 2-139 enclose the ADF-H 1 domain; it reads SHQTGIQASE…SLHGYKKYLL (138 aa). Phosphoserine occurs at positions 143 and 277. The 139-residue stretch at 175 to 313 folds into the ADF-H 2 domain; sequence LQGVAFPISR…TADFLYEEVH (139 aa). Residue tyrosine 309 is modified to Phosphotyrosine. Positions 316–350 are disordered; that stretch reads QHAHKQSFAKPKGPAGKRGIRRLIRGPAETEATTD. Residue threonine 349 is modified to Phosphothreonine.

Belongs to the actin-binding proteins ADF family. Twinfilin subfamily. As to quaternary structure, interacts with G-actin; ADP-actin form and capping protein (CP). May also be able to interact with TWF2 and phosphoinositides, PI(4,5)P2. When bound to PI(4,5)P2, it is down-regulated. Interacts with ACTG1. Post-translationally, phosphorylated on serine and threonine residues. Expressed at high levels in the colon, testis, ovary, prostate and lung. Expressed at lower levels in the brain, bladder and heart. Not detected in liver.

Its subcellular location is the cytoplasm. It localises to the cytoskeleton. Functionally, actin-binding protein involved in motile and morphological processes. Inhibits actin polymerization, likely by sequestering G-actin. By capping the barbed ends of filaments, it also regulates motility. Seems to play an important role in clathrin-mediated endocytosis and distribution of endocytic organelles. The chain is Twinfilin-1 (TWF1) from Homo sapiens (Human).